The following is an 85-amino-acid chain: Large ribosomal subunit protein bL27 (85 aa).

A disordered region spans residues 1–22 (MAHKKAGGSTNNGRDSESKRLG).

The protein belongs to the bacterial ribosomal protein bL27 family.

The chain is Large ribosomal subunit protein bL27 from Vibrio atlanticus (strain LGP32) (Vibrio splendidus (strain Mel32)).